Here is a 214-residue protein sequence, read N- to C-terminus: Mediator of RNA polymerase II transcription subunit 29 (214 aa).

Residues Met-1 to Val-78 form a disordered region. The span at Val-15–Gly-34 shows a compositional bias: gly residues. The span at Gln-44–Gln-74 shows a compositional bias: low complexity.

This sequence belongs to the Mediator complex subunit 29 family. In terms of assembly, component of the Mediator complex.

The protein resides in the nucleus. Its function is as follows. Component of the Mediator complex, a coactivator involved in the regulated transcription of nearly all RNA polymerase II-dependent genes. Mediator functions as a bridge to convey information from gene-specific regulatory proteins to the basal RNA polymerase II transcription machinery. Mediator is recruited to promoters by direct interactions with regulatory proteins and serves as a scaffold for the assembly of a functional preinitiation complex with RNA polymerase II and the general transcription factors. This Aedes aegypti (Yellowfever mosquito) protein is Mediator of RNA polymerase II transcription subunit 29 (ix).